Consider the following 372-residue polypeptide: Heat-inducible transcription repressor HrcA (372 aa).

The protein belongs to the HrcA family.

Its function is as follows. Negative regulator of class I heat shock genes (grpE-dnaK-dnaJ and groELS operons). Prevents heat-shock induction of these operons. This is Heat-inducible transcription repressor HrcA from Chloroflexus aurantiacus (strain ATCC 29366 / DSM 635 / J-10-fl).